The primary structure comprises 374 residues: Anhydro-N-acetylmuramic acid kinase (374 aa).

An ATP-binding site is contributed by 9-16; that stretch reads GTSLDGID.

Belongs to the anhydro-N-acetylmuramic acid kinase family.

The catalysed reaction is 1,6-anhydro-N-acetyl-beta-muramate + ATP + H2O = N-acetyl-D-muramate 6-phosphate + ADP + H(+). It functions in the pathway amino-sugar metabolism; 1,6-anhydro-N-acetylmuramate degradation. The protein operates within cell wall biogenesis; peptidoglycan recycling. Functionally, catalyzes the specific phosphorylation of 1,6-anhydro-N-acetylmuramic acid (anhMurNAc) with the simultaneous cleavage of the 1,6-anhydro ring, generating MurNAc-6-P. Is required for the utilization of anhMurNAc either imported from the medium or derived from its own cell wall murein, and thus plays a role in cell wall recycling. The polypeptide is Anhydro-N-acetylmuramic acid kinase (Methylobacterium nodulans (strain LMG 21967 / CNCM I-2342 / ORS 2060)).